A 412-amino-acid polypeptide reads, in one-letter code: 43 kDa receptor-associated protein of the synapse (412 aa).

Gly-2 carries the N-myristoyl glycine lipid modification. TPR repeat units follow at residues 6–39 (TKQQ…SADP), 83–116 (TEGY…QGTT), 123–156 (GQVS…AHNN), 163–196 (CRVC…VNDY), 206–239 (AMSQ…ALQH), 246–279 (ALCL…MTEI), and 286–319 (IQVL…AEGL). Position 196 is a phosphotyrosine (Tyr-196). The segment at 363–403 (CGMCGESIGEKNNQLQALPCSHFFHLKCLQTNGTRGCPNCR) adopts an RING-type zinc-finger fold.

This sequence belongs to the RAPsyn family. As to expression, expressed in muscle fibers and in neurons.

It is found in the cell membrane. Its subcellular location is the postsynaptic cell membrane. The protein localises to the cytoplasm. It localises to the cytoskeleton. Postsynaptic protein required for clustering of nicotinic acetylcholine receptors (nAChRs) at the neuromuscular junction. It may link the receptor to the underlying postsynaptic cytoskeleton, possibly by direct association with actin or spectrin. The polypeptide is 43 kDa receptor-associated protein of the synapse (RAPSN) (Gallus gallus (Chicken)).